A 150-amino-acid polypeptide reads, in one-letter code: Troponin C, isoform 2A (150 aa).

An N-acetylmethionine modification is found at Met-1. 4 consecutive EF-hand domains span residues 7–42 (EQIGALQKAFDSFDTDSKGFITPETVGVILRMMGVK), 43–78 (ISEKNLQEVIAETDEDGSGELEFEEFVELAAKFLIE), 83–118 (ALKTELREAFRVYDKEGNGYITTDVLKEILRELDNR), and 119–150 (LTEEDLDSIIEEVDEDGSGTLDFNEFMEMMNG). Asp-56, Asp-58, Ser-60, Glu-62, and Glu-67 together coordinate Ca(2+). Positions 132, 134, 136, 138, and 143 each coordinate Ca(2+).

It belongs to the troponin C family.

Its function is as follows. Troponin is the central regulatory protein of striated muscle contraction. Tn consists of three components: Tn-I which is the inhibitor of actomyosin ATPase, Tn-T which contains the binding site for tropomyosin and Tn-C. The binding of calcium to Tn-C abolishes the inhibitory action of Tn on actin filaments. This Homarus americanus (American lobster) protein is Troponin C, isoform 2A.